Consider the following 967-residue polypeptide: Alanine--tRNA ligase, cytoplasmic (967 aa).

H605, H609, C724, and H728 together coordinate Zn(2+).

Belongs to the class-II aminoacyl-tRNA synthetase family. In terms of assembly, monomer. The cofactor is Zn(2+). In terms of processing, the N-terminus is blocked.

The protein localises to the cytoplasm. The catalysed reaction is tRNA(Ala) + L-alanine + ATP = L-alanyl-tRNA(Ala) + AMP + diphosphate. Functionally, catalyzes the attachment of alanine to tRNA(Ala) in a two-step reaction: alanine is first activated by ATP to form Ala-AMP and then transferred to the acceptor end of tRNA(Ala). Also edits incorrectly charged tRNA(Ala) via its editing domain. The sequence is that of Alanine--tRNA ligase, cytoplasmic from Bombyx mori (Silk moth).